Consider the following 102-residue polypeptide: MTLRVVPEGLAAASAAVEALTARLAAAHASAAPVITAVVPPAADPVSLQTAAGFSAQGVEHAVVTAEGVEELGRAGVGVGESGASYLAGDAAAAATYGVVGG.

Residues 3-92 (LRVVPEGLAA…GASYLAGDAA (90 aa)) form the PE domain.

It belongs to the mycobacterial PE family.

Its subcellular location is the secreted. It localises to the cell envelope. It is found in the cell surface. Its function is as follows. Important for the siderophore-mediated iron-acquisition function of ESX-3. May play a pivotal role in the evasion of host immune response by M.tuberculosis. Mediates production of IL-10 via activation of the p38 and ERK1/2 mitogen-activated protein kinase (MAPK) signaling pathways. The sequence is that of PE family immunomodulator PE5 from Mycobacterium tuberculosis (strain ATCC 25618 / H37Rv).